Consider the following 977-residue polypeptide: Serine/threonine-protein kinase/endoribonuclease IRE1 (977 aa).

The N-terminal stretch at 1–18 (MPARRLLLLLTLLLPGLG) is a signal peptide. Over 19-443 (IFGSTSTVTL…EAPVDSMLKD (425 aa)) the chain is Lumenal. N-linked (GlcNAc...) asparagine glycosylation is present at Asn-176. Over residues 410-419 (TSENAPTTVS) the composition is skewed to polar residues. Residues 410–434 (TSENAPTTVSRDVEEKPAHAPARPE) form a disordered region. Residues 444 to 464 (MATIILSTFLLIGWVAFIITY) traverse the membrane as a helical segment. Residues 465 to 977 (PLSMHQQQQL…PQPPVTPDAL (513 aa)) lie on the Cytoplasmic side of the membrane. Positions 491–559 (QQQQQLPFHP…PSLEQDDGDE (69 aa)) are disordered. The span at 513 to 552 (TSGPYSESSGTSSPSTSPRASNHSLCSGSSASKAGSSPSL) shows a compositional bias: low complexity. The Protein kinase domain occupies 571-832 (FCPKDVLGHG…AKHVLKHPFF (262 aa)). Residues 577 to 585 (LGHGAEGTI), Lys-599, and 643 to 645 (ELC) each bind ATP. The active-site Proton acceptor is Asp-688. ATP contacts are provided by residues 690-693 (KPHN) and Asp-711. Phosphoserine occurs at positions 724 and 729. In terms of domain architecture, KEN spans 835-963 (LEKQLQFFQD…ERLFQPYYFH (129 aa)). The tract at residues 906–907 (NK) is interacts with hydroxy-aryl-aldehyde inhibitors. Residue Thr-973 is modified to Phosphothreonine.

Belongs to the protein kinase superfamily. Ser/Thr protein kinase family. Monomer. Homodimer; disulfide-linked; homodimerization takes place in response to endoplasmic reticulum stress and promotes activation of the kinase and endoribonuclease activities. Dimer formation is driven by hydrophobic interactions within the N-terminal luminal domains and stabilized by disulfide bridges. Interacts (via the luminal region) with DNAJB9/ERdj4; interaction takes place in unstressed cells and promotes recruitment of HSPA5/BiP. Interacts (via the luminal region) with HSPA5/BiP; HSPA5/BiP is a negative regulator of the unfolded protein response (UPR) that prevents homodimerization of ERN1/IRE1 and subsequent activation of the protein. Interaction with HSPA5 also competitively inhibits ERN1 interaction with MANF. Interacts with PDIA6, a negative regulator of the UPR; the interaction is direct and disrupts homodimerization. Interacts with DAB2IP (via PH domain); the interaction occurs in a endoplasmic reticulum stress-induced dependent manner and is required for subsequent recruitment of TRAF2 to ERN1/IRE1. Interacts with TAOK3 and TRAF2. Interacts with RNF13. Interacts with LACC1. Interacts (when unphosphorylated) with DDRGK1; interaction is dependent on UFM1 and takes place in response to endoplasmic reticulum stress, regulating ERN1/IRE1-alpha stability. Interacts (via N-terminus) with P4HB/PDIA1; the interaction is enhanced by phosphorylation of P4HB by FAM20C in response to endoplasmic reticulum stress and results in attenuation of ERN1 activity. Interacts with TMBIM6; this interaction inhibits ERN1 activity. Interacts (via luminal domain) with MANF (via C-terminus); the interaction is decreased in the presence of increasing concentrations of Ca(2+). Requires Mg(2+) as cofactor. Post-translationally, autophosphorylated following homodimerization. Autophosphorylation promotes activation of the endoribonuclease domain. In response to ER stress, phosphorylated at Ser-724, Ser-729 and possibly Ser-726; phosphorylation promotes oligomerization and endoribonuclease activity. Dephosphorylated at Ser-724, Ser-729 and possibly Ser-726 by RPAP2 to abort failed ER-stress adaptation and trigger apoptosis. Phosphorylated at Ser-724; in response to the ER stressor tunicamycin. ADP-ribosylated by PARP16 upon ER stress, which increases both kinase and endonuclease activities. In terms of tissue distribution, ubiquitously expressed. High levels observed in pancreatic tissue.

Its subcellular location is the endoplasmic reticulum membrane. It catalyses the reaction L-seryl-[protein] + ATP = O-phospho-L-seryl-[protein] + ADP + H(+). The enzyme catalyses L-threonyl-[protein] + ATP = O-phospho-L-threonyl-[protein] + ADP + H(+). The kinase domain is activated by trans-autophosphorylation following homodimerization. Kinase activity is required for activation of the endoribonuclease domain. Endoribonuclease activity is specifically inhibited by hydroxy-aryl-aldehydes (HAA). Serine/threonine-protein kinase and endoribonuclease that acts as a key sensor for the endoplasmic reticulum unfolded protein response (UPR). In unstressed cells, the endoplasmic reticulum luminal domain is maintained in its inactive monomeric state by binding to the endoplasmic reticulum chaperone HSPA5/BiP. Accumulation of misfolded proteins in the endoplasmic reticulum causes release of HSPA5/BiP, allowing the luminal domain to homodimerize, promoting autophosphorylation of the kinase domain and subsequent activation of the endoribonuclease activity. The endoribonuclease activity is specific for XBP1 mRNA and excises 26 nucleotides from XBP1 mRNA. The resulting spliced transcript of XBP1 encodes a transcriptional activator protein that up-regulates expression of UPR target genes. Acts as an upstream signal for ER stress-induced GORASP2-mediated unconventional (ER/Golgi-independent) trafficking of CFTR to cell membrane by modulating the expression and localization of SEC16A. The polypeptide is Serine/threonine-protein kinase/endoribonuclease IRE1 (Homo sapiens (Human)).